A 334-amino-acid chain; its full sequence is DNA polymerase III subunit delta' (334 aa).

As to quaternary structure, the DNA polymerase III holoenzyme complex contains at least 10 different subunits organized into 3 functionally essential subassemblies: the Pol III core, the beta sliding clamp processivity factor and the clamp-loading complex. The Pol III core (subunits alpha, epsilon and theta) contains the polymerase and the 3'-5' exonuclease proofreading activities. The polymerase is tethered to the template via the dimeric beta sliding clamp processivity factor. The clamp-loading complex (also called gamma complex) assembles the beta sliding clamp onto the primed template and plays a central role in the organization and communication at the replication fork. The clamp-loading complex contains delta, delta', psi and chi, and 3 copies of either or both of two different DnaX proteins, gamma and tau. The DNA replisome complex has a single clamp loader (3 tau and 1 each of delta, delta', psi and chi subunits) which binds 3 Pol III cores (1 core on the leading strand and 2 on the lagging strand) each with a beta sliding clamp dimer. Additional proteins in the replisome are other copies of gamma, psi and chi, Ssb, DNA helicase and RNA primase. The clamp loader hydrolyzes ATP to assemble the beta processivity factor onto the primed template and plays a central role in the organization and communication at the replication fork; the minimal complex to load the beta sliding clamp on DNA is delta, delta', gamma.

The enzyme catalyses DNA(n) + a 2'-deoxyribonucleoside 5'-triphosphate = DNA(n+1) + diphosphate. Its function is as follows. Part of the beta sliding clamp loading complex, which hydrolyzes ATP to load the beta clamp onto primed DNA to form the DNA replication pre-initiation complex. DNA polymerase III is a complex, multichain enzyme responsible for most of the replicative synthesis in bacteria. This DNA polymerase also exhibits 3' to 5' exonuclease activity. The gamma complex (gamma(3),delta,delta') is thought to load beta dimers onto DNA by binding ATP which alters the complex's conformation so it can bind beta sliding clamp dimers and open them at one interface. Primed DNA is recognized, ATP is hydrolyzed releasing the gamma complex and closing the beta sliding clamp ring around the primed DNA. The protein is DNA polymerase III subunit delta' (holB) of Escherichia coli (strain K12).